The primary structure comprises 582 residues: ATP-dependent lipid A-core flippase (582 aa).

A run of 5 helical transmembrane segments spans residues 16 to 36 (LWPT…ALIL), 63 to 83 (VLVW…ITSY), 153 to 173 (IIGL…ILIV), 253 to 273 (PIIQ…ASFP), and 275 to 295 (VMDS…IALM). Residues 28-310 (IVAGVALILN…LTNVNAQFQR (283 aa)) enclose the ABC transmembrane type-1 domain. The ABC transporter domain maps to 342-578 (VEFRNVTFTY…RGVYAQLHKM (237 aa)). 376–383 (GRSGSGKS) is an ATP binding site.

Belongs to the ABC transporter superfamily. Lipid exporter (TC 3.A.1.106) family. In terms of assembly, homodimer.

It localises to the cell inner membrane. The enzyme catalyses ATP + H2O + lipid A-core oligosaccharideSide 1 = ADP + phosphate + lipid A-core oligosaccharideSide 2.. Involved in lipopolysaccharide (LPS) biosynthesis. Translocates lipid A-core from the inner to the outer leaflet of the inner membrane. Transmembrane domains (TMD) form a pore in the inner membrane and the ATP-binding domain (NBD) is responsible for energy generation. The polypeptide is ATP-dependent lipid A-core flippase (Escherichia coli O157:H7).